Consider the following 163-residue polypeptide: I-Kappa-B like protein N3 (163 aa).

2 ANK repeats span residues 62–95 and 100–130; these read LGDTCIHVAALANRGKQAIQLIEKLVEYGANLNT and NGDTVLDIAVKNKDHELTVWLWKQPSINLQT.

This sequence belongs to the polydnaviridae I-Kappa-B like protein family.

Functionally, suppresses the host immune response through NF-kappa-B inactivation. Possesses ankyrin repeat domains required for NF-kappa-B binding but lacks the regulatory regions required for dissociation from NF-kappa-B and degradation. Therefore, prevents host NF-kappa-B release and subsequent activation. This is I-Kappa-B like protein N3 (N6) from Microplitis demolitor (Parasitoid wasp).